Reading from the N-terminus, the 690-residue chain is MTKKILLIEIGTEELPARLLSKISLYFYKNFIKELDFHNISYKNIKYFSTPRRLALKIKDIDITERFVEIKKRGPSIINSYDKDGFLTEAATRWLKHCGININQAIRLKNEKGEWLFYKTRKKQENIESLIPKITESALKNISIKKSMRWGQDNQKFSRPIRNIVILLDKKVIPGDVFNITSKNLLQNHLSSKDSQIKIKDAKDYPKILLEKNNIIADYFIRKEKIIEDIENIAKKIKGFIKKNNVLIEEVTALVESPKALLVNFQEKFLQIPKKILINTIEKKQKCFPIYNSEKKLLPYFIFISNIQTQESEKIIIGNQRVMHARLSDAEFFFKNDRKVKLESRLLSLKKVLFQNNLGSLYEKTLRIKLLIKWIAKYSSSDVEDSIRAALLSKCDLVTDVVCEFPELQGKIGMYYALEDKEKKDVATALEEQYLPRFSGDKLPCTPIGCGLSIADKMDTLSGMFYIGNIPSSDKDPFALRRLAIGIIRIILEKNIPLNLEDLIKKSLSLYNKKNEDDLILFDKMIKFFMIRLFHWYEETGYSAKIIKSVLSCKSIELIDIHKKIQAISFFKKLKDSQSIILSIKRISNILAKEKEKINGDINKKLMIEKEEIILFNNIEEFDNYTKNLFLEKKYNDILIKIKSFENPIYNFFKKVKIYHSDSKIRLNRLLLLSKLKKIFFKIADFSYLY.

Belongs to the class-II aminoacyl-tRNA synthetase family. As to quaternary structure, tetramer of two alpha and two beta subunits.

It localises to the cytoplasm. It carries out the reaction tRNA(Gly) + glycine + ATP = glycyl-tRNA(Gly) + AMP + diphosphate. The sequence is that of Glycine--tRNA ligase beta subunit from Buchnera aphidicola subsp. Acyrthosiphon pisum (strain 5A).